The primary structure comprises 651 residues: Acetyl-coenzyme A synthetase (651 aa).

CoA is bound by residues 191 to 194 (RGGK), Thr-311, and Asn-335. ATP contacts are provided by residues 387–389 (GEP), 411–416 (DTWWQT), Asp-500, and Arg-515. A CoA-binding site is contributed by Ser-523. Arg-526 provides a ligand contact to ATP. The Mg(2+) site is built by Val-537, His-539, and Val-542. A CoA-binding site is contributed by Arg-584. Lys-609 bears the N6-acetyllysine mark.

It belongs to the ATP-dependent AMP-binding enzyme family. The cofactor is Mg(2+). Acetylated. Deacetylation by the SIR2-homolog deacetylase activates the enzyme.

It catalyses the reaction acetate + ATP + CoA = acetyl-CoA + AMP + diphosphate. Its function is as follows. Catalyzes the conversion of acetate into acetyl-CoA (AcCoA), an essential intermediate at the junction of anabolic and catabolic pathways. AcsA undergoes a two-step reaction. In the first half reaction, AcsA combines acetate with ATP to form acetyl-adenylate (AcAMP) intermediate. In the second half reaction, it can then transfer the acetyl group from AcAMP to the sulfhydryl group of CoA, forming the product AcCoA. The protein is Acetyl-coenzyme A synthetase of Pseudomonas syringae pv. syringae (strain B728a).